The primary structure comprises 157 residues: Ciliary microtubule inner protein 5 (157 aa).

Disordered stretches follow at residues Met-1–Gly-57 and Asp-92–Ser-124. The segment covering Asp-92–Arg-109 has biased composition (basic and acidic residues).

It is found in the cell projection. Its subcellular location is the cilium. The polypeptide is Ciliary microtubule inner protein 5 (CIMIP5) (Bos taurus (Bovine)).